The chain runs to 562 residues: Potassium-transporting ATPase potassium-binding subunit (562 aa).

10 helical membrane passes run 5 to 25 (AFLL…PLGS), 63 to 83 (AAAI…LLMA), 132 to 152 (GLTV…FALI), 175 to 195 (LYVL…QGVL), 250 to 270 (LSNI…CFAF), 279 to 299 (QGHA…AVVM), 379 to 399 (GLYG…LMIG), 416 to 436 (MTAL…ALAL), 483 to 503 (VLLA…VLAI), and 526 to 546 (LFIG…FIPA).

The protein belongs to the KdpA family. In terms of assembly, the system is composed of three essential subunits: KdpA, KdpB and KdpC.

The protein resides in the cell inner membrane. In terms of biological role, part of the high-affinity ATP-driven potassium transport (or Kdp) system, which catalyzes the hydrolysis of ATP coupled with the electrogenic transport of potassium into the cytoplasm. This subunit binds the periplasmic potassium ions and delivers the ions to the membrane domain of KdpB through an intramembrane tunnel. The protein is Potassium-transporting ATPase potassium-binding subunit of Pectobacterium atrosepticum (strain SCRI 1043 / ATCC BAA-672) (Erwinia carotovora subsp. atroseptica).